The primary structure comprises 239 residues: Pyridoxine 5'-phosphate synthase (239 aa).

N7 lines the 3-amino-2-oxopropyl phosphate pocket. 9-10 is a 1-deoxy-D-xylulose 5-phosphate binding site; the sequence is DH. 3-amino-2-oxopropyl phosphate is bound at residue R18. H43 acts as the Proton acceptor in catalysis. R45 and H50 together coordinate 1-deoxy-D-xylulose 5-phosphate. E70 acts as the Proton acceptor in catalysis. T100 lines the 1-deoxy-D-xylulose 5-phosphate pocket. The Proton donor role is filled by H191. 3-amino-2-oxopropyl phosphate-binding positions include G192 and 213–214; that span reads GH.

The protein belongs to the PNP synthase family. Homooctamer; tetramer of dimers.

The protein localises to the cytoplasm. It carries out the reaction 3-amino-2-oxopropyl phosphate + 1-deoxy-D-xylulose 5-phosphate = pyridoxine 5'-phosphate + phosphate + 2 H2O + H(+). The protein operates within cofactor biosynthesis; pyridoxine 5'-phosphate biosynthesis; pyridoxine 5'-phosphate from D-erythrose 4-phosphate: step 5/5. Its function is as follows. Catalyzes the complicated ring closure reaction between the two acyclic compounds 1-deoxy-D-xylulose-5-phosphate (DXP) and 3-amino-2-oxopropyl phosphate (1-amino-acetone-3-phosphate or AAP) to form pyridoxine 5'-phosphate (PNP) and inorganic phosphate. The polypeptide is Pyridoxine 5'-phosphate synthase (Gloeobacter violaceus (strain ATCC 29082 / PCC 7421)).